The following is a 201-amino-acid chain: Small ribosomal subunit protein uS4 (201 aa).

Residues 91-157 (SRLDNVVYRA…LPFQVARETV (67 aa)) enclose the S4 RNA-binding domain.

It belongs to the universal ribosomal protein uS4 family. In terms of assembly, part of the 30S ribosomal subunit. Contacts protein S5. The interaction surface between S4 and S5 is involved in control of translational fidelity.

Functionally, one of the primary rRNA binding proteins, it binds directly to 16S rRNA where it nucleates assembly of the body of the 30S subunit. Its function is as follows. With S5 and S12 plays an important role in translational accuracy. The polypeptide is Small ribosomal subunit protein uS4 (Rhodococcus erythropolis (strain PR4 / NBRC 100887)).